Reading from the N-terminus, the 231-residue chain is Large ribosomal subunit protein uL1 (231 aa).

The protein belongs to the universal ribosomal protein uL1 family. Part of the 50S ribosomal subunit.

Binds directly to 23S rRNA. The L1 stalk is quite mobile in the ribosome, and is involved in E site tRNA release. Functionally, protein L1 is also a translational repressor protein, it controls the translation of the L11 operon by binding to its mRNA. The sequence is that of Large ribosomal subunit protein uL1 from Pseudomonas syringae pv. syringae (strain B728a).